The sequence spans 521 residues: Probable ATP-dependent RNA helicase Dbp45A (521 aa).

Residues 7 to 35 (NPFQILGLRPWLVKQLTKLGLKGATPIQQ) carry the Q motif motif. Residues 38-209 (IPAILAGQDC…IFPIASDCFE (172 aa)) enclose the Helicase ATP-binding domain. 51–58 (AKTGSGKT) is a binding site for ATP. Residues 157 to 160 (DEAD) carry the DEAD box motif. The Helicase C-terminal domain maps to 237–386 (VLIEALRKYR…EHPIDQRMVE (150 aa)). The disordered stretch occupies residues 448–521 (KRKLQHAEPA…GRADVKKDKA (74 aa)). Composition is skewed to basic and acidic residues over residues 460 to 482 (EEGK…FEKK) and 502 to 521 (LNKE…KDKA).

It belongs to the DEAD box helicase family. DDX49/DBP8 subfamily.

It catalyses the reaction ATP + H2O = ADP + phosphate + H(+). Functionally, probable ATP-binding RNA helicase. This Drosophila melanogaster (Fruit fly) protein is Probable ATP-dependent RNA helicase Dbp45A (Dbp45A).